The chain runs to 216 residues: Ras-related protein Rab11A (216 aa).

GTP-binding positions include 19-27 (GDSGVGKSN), 38-44 (CLESKST), 67-71 (DTAGQ), 125-128 (NKSD), and 155-157 (SAL). The short motif at 41 to 49 (SKSTIGVEF) is the Effector region element. Residues cysteine 213 and cysteine 214 are each lipidated (S-geranylgeranyl cysteine).

The protein belongs to the small GTPase superfamily. Rab family.

The protein localises to the cell membrane. The protein is Ras-related protein Rab11A (RAB11A) of Nicotiana tabacum (Common tobacco).